We begin with the raw amino-acid sequence, 242 residues long: Caffeoyl-CoA O-methyltransferase 3 (242 aa).

Position 16 (Lys-16) interacts with substrate. S-adenosyl-L-methionine is bound by residues Thr-58, Glu-80, Gly-82–Val-83, Ser-88, Asp-106, and Ala-135. Position 158 (Asp-158) interacts with substrate. Residue Asp-158 coordinates a divalent metal cation. Asp-160 provides a ligand contact to S-adenosyl-L-methionine. Asp-184 and Asn-185 together coordinate a divalent metal cation. Asn-189 contacts substrate.

The protein belongs to the class I-like SAM-binding methyltransferase superfamily. Cation-dependent O-methyltransferase family. CCoAMT subfamily. The cofactor is Mg(2+). In terms of tissue distribution, mostly expressed in the bottom and middle parts of the stems.

The catalysed reaction is (E)-caffeoyl-CoA + S-adenosyl-L-methionine = (E)-feruloyl-CoA + S-adenosyl-L-homocysteine + H(+). Its pathway is aromatic compound metabolism; phenylpropanoid biosynthesis. Functionally, methylates caffeoyl-CoA to feruloyl-CoA and 5-hydroxyferuloyl-CoA to sinapoyl-CoA. Plays a role in the synthesis of feruloylated polysaccharides. Involved in the reinforcement of the plant cell wall. Also involved in the responding to wounding or pathogen challenge by the increased formation of cell wall-bound ferulic acid polymers. Also methylates free caffeic and 5-hydroxyferulic acids. The chain is Caffeoyl-CoA O-methyltransferase 3 (CCOAOMT3) from Nicotiana tabacum (Common tobacco).